The chain runs to 249 residues: Small ribosomal subunit protein uS2 (249 aa).

This sequence belongs to the universal ribosomal protein uS2 family.

The chain is Small ribosomal subunit protein uS2 from Bordetella parapertussis (strain 12822 / ATCC BAA-587 / NCTC 13253).